We begin with the raw amino-acid sequence, 317 residues long: MLSFLAALSLPLALVNAYANPGTCNGNCWAHDPGLWKHDDGRYFLFSTGNGIHISSAPSLQGPWTEVGYALPDGSSINHDGNKNLWAPDVHKGDDGKYYMYYSVSTLGSQNSVIGVASSTTMEPGSWTDHGSTGLSSDGSQGYNTIDANWIKIGDQQVLNFGSYWQGLYQIDLAGPLKIGTAAPVNIAYNATGQHAIEASFLYQQNGFYYLFFSSGKANGYDTSFPAQGEEYRINVCRSSTGRGDFVDKNGVSCLQSGGTTVLASHDNVYGPGGQGVLEDNGAVLYYHYAPRNGDLSVSSYQFGWNRLNWVDGWPTV.

An N-terminal signal peptide occupies residues 1 to 17; that stretch reads MLSFLAALSLPLALVNA. Asp32 functions as the Proton acceptor in the catalytic mechanism. Residue Asn190 is glycosylated (N-linked (GlcNAc...) asparagine). Residue Glu198 is the Proton donor of the active site.

The protein belongs to the glycosyl hydrolase 43 family.

It is found in the secreted. It catalyses the reaction Endohydrolysis of (1-&gt;5)-alpha-arabinofuranosidic linkages in (1-&gt;5)-arabinans.. It functions in the pathway glycan metabolism; L-arabinan degradation. Its function is as follows. Endo-1,5-alpha-L-arabinanase involved in degradation of pectin. Its preferred substrate is linear 1,5-alpha-L-arabinan. This Aspergillus flavus (strain ATCC 200026 / FGSC A1120 / IAM 13836 / NRRL 3357 / JCM 12722 / SRRC 167) protein is Probable arabinan endo-1,5-alpha-L-arabinosidase C (abnC).